The sequence spans 219 residues: Translation initiation factor IF-3 (219 aa).

The protein belongs to the IF-3 family. Monomer.

The protein localises to the cytoplasm. In terms of biological role, IF-3 binds to the 30S ribosomal subunit and shifts the equilibrium between 70S ribosomes and their 50S and 30S subunits in favor of the free subunits, thus enhancing the availability of 30S subunits on which protein synthesis initiation begins. This chain is Translation initiation factor IF-3, found in Prochlorococcus marinus (strain MIT 9303).